The chain runs to 586 residues: Dolichyl-diphosphooligosaccharide--protein glycosyltransferase subunit 1 (586 aa).

A signal peptide spans 1-15 (MRLLFAIALLGAVFA). Residues 16-421 (EDAWKAANVD…EFEFVDMLRE (406 aa)) lie on the Lumenal side of the membrane. Residues 422-442 (PLLASAFFFSLFFVIIVYSRF) traverse the membrane as a helical segment. The Cytoplasmic segment spans residues 443-586 (DFTISSDPAK…NRADSVLASI (144 aa)).

Belongs to the OST1 family. Component of the oligosaccharyltransferase (OST) complex.

The protein localises to the endoplasmic reticulum membrane. It is found in the cytoplasmic granule. Its pathway is protein modification; protein glycosylation. Its function is as follows. Subunit of the oligosaccharyl transferase (OST) complex that catalyzes the initial transfer of a defined glycan (Glc(3)Man(9)GlcNAc(2) in eukaryotes) from the lipid carrier dolichol-pyrophosphate to an asparagine residue within an Asn-X-Ser/Thr consensus motif in nascent polypeptide chains, the first step in protein N-glycosylation. N-glycosylation occurs cotranslationally and the complex associates with the Sec61 complex at the channel-forming translocon complex that mediates protein translocation across the endoplasmic reticulum (ER). All subunits are required for a maximal enzyme activity. The protein is Dolichyl-diphosphooligosaccharide--protein glycosyltransferase subunit 1 of Caenorhabditis elegans.